The chain runs to 463 residues: Tryprostatin B synthase (463 aa).

The brevianamide F site is built by M93 and E101. Residues R112, K200, and Y202 each coordinate dimethylallyl diphosphate. Y204 provides a ligand contact to brevianamide F. 6 residues coordinate dimethylallyl diphosphate: K293, Y295, Q379, Y381, Y445, and Y449.

Belongs to the tryptophan dimethylallyltransferase family.

The enzyme catalyses brevianamide F + dimethylallyl diphosphate = tryprostatin B + diphosphate. It functions in the pathway mycotoxin biosynthesis. Brevianamide F prenyltransferase; part of the gene cluster that mediates the biosynthesis of fumitremorgins, indole alkaloids that carry not only intriguing chemical structures, but also interesting biological and pharmacological activities. The biosynthesis of fumitremorgin-type alkaloids begins by condensation of the two amino acids L-tryptophan and L-proline to brevianamide F, catalyzed by the non-ribosomal peptide synthetase ftmPS/ftmA. Brevianamide F is then prenylated by the prenyltransferase ftmPT1/ftmB in the presence of dimethylallyl diphosphate, resulting in the formation of tryprostatin B. The three cytochrome P450 monooxygenases, ftmP450-1/ftmC, ftmP450-2/ftmE and ftmP450-3/FtmG, are responsible for the conversion of tryprostatin B to 6-hydroxytryprostatin B, tryprostatin A to fumitremorgin C and fumitremorgin C to 12,13-dihydroxyfumitremorgin C, respectively. The putative methyltransferase ftmMT/ftmD is expected for the conversion of 6-hydroxytryprostatin B to tryprostatin A. FtmPT2/FtmH catalyzes the prenylation of 12,13-dihydroxyfumitre-morgin C in the presence of dimethylallyl diphosphate, resulting in the formation of fumitremorgin B. Fumitremorgin B is further converted to verruculogen by ftmOx1/ftmF via the insertion of an endoperoxide bond between the two prenyl moieties. Finally, verruculogen is further converted to fumitremorgin A by the verruculogen prenyltransferase ftmPT3. This is Tryprostatin B synthase from Neosartorya fischeri (strain ATCC 1020 / DSM 3700 / CBS 544.65 / FGSC A1164 / JCM 1740 / NRRL 181 / WB 181) (Aspergillus fischerianus).